Here is a 468-residue protein sequence, read N- to C-terminus: GTPase Der (468 aa).

EngA-type G domains are found at residues 3–167 and 179–352; these read PTLV…PYAE and PVIA…TAAM. GTP is bound by residues 9-16, 56-60, 119-122, 185-192, 232-236, and 297-300; these read GRPNVGKS, DTGGF, NKAE, DTAGL, and NKWD. Residues 353–437 form the KH-like domain; the sequence is AHIPTPKLTR…PLRVEFRTGH (85 aa). The disordered stretch occupies residues 434–468; sequence RTGHNPYAGKKAPPLTEEEARRAHSRRRRNRKKYG. The span at 456 to 468 shows a compositional bias: basic residues; the sequence is AHSRRRRNRKKYG.

This sequence belongs to the TRAFAC class TrmE-Era-EngA-EngB-Septin-like GTPase superfamily. EngA (Der) GTPase family. As to quaternary structure, associates with the 50S ribosomal subunit.

Functionally, GTPase that plays an essential role in the late steps of ribosome biogenesis. The sequence is that of GTPase Der from Nitrosomonas eutropha (strain DSM 101675 / C91 / Nm57).